We begin with the raw amino-acid sequence, 245 residues long: Sugar fermentation stimulation protein homolog (245 aa).

It belongs to the SfsA family.

This chain is Sugar fermentation stimulation protein homolog, found in Rhodospirillum rubrum (strain ATCC 11170 / ATH 1.1.1 / DSM 467 / LMG 4362 / NCIMB 8255 / S1).